Here is a 379-residue protein sequence, read N- to C-terminus: Acyl-CoA dehydrogenase, short-chain specific (379 aa).

Belongs to the acyl-CoA dehydrogenase family. It depends on FAD as a cofactor.

The catalysed reaction is butanoyl-CoA + oxidized [electron-transfer flavoprotein] + H(+) = (2E)-butenoyl-CoA + reduced [electron-transfer flavoprotein]. It catalyses the reaction a short-chain 2,3-saturated fatty acyl-CoA + oxidized [electron-transfer flavoprotein] + H(+) = a short-chain (2E)-enoyl-CoA + reduced [electron-transfer flavoprotein]. The protein operates within lipid metabolism; butanoate metabolism. The chain is Acyl-CoA dehydrogenase, short-chain specific (bcd) from Clostridium acetobutylicum (strain ATCC 824 / DSM 792 / JCM 1419 / IAM 19013 / LMG 5710 / NBRC 13948 / NRRL B-527 / VKM B-1787 / 2291 / W).